The chain runs to 457 residues: Siroheme synthase (457 aa).

The tract at residues 1 to 204 (MDHLPIFCQL…NDQKAITETT (204 aa)) is precorrin-2 dehydrogenase /sirohydrochlorin ferrochelatase. Residues 22 to 23 (DV) and 43 to 44 (LA) contribute to the NAD(+) site. Position 128 is a phosphoserine (S128). The uroporphyrinogen-III C-methyltransferase stretch occupies residues 216-457 (GEVVLVGAGP…RDKLNWFSNH (242 aa)). P225 is an S-adenosyl-L-methionine binding site. The active-site Proton acceptor is D248. The active-site Proton donor is K270. Residues 301-303 (GGD), I306, 331-332 (TA), M382, and G411 each bind S-adenosyl-L-methionine.

It in the N-terminal section; belongs to the precorrin-2 dehydrogenase / sirohydrochlorin ferrochelatase family. This sequence in the C-terminal section; belongs to the precorrin methyltransferase family.

The enzyme catalyses uroporphyrinogen III + 2 S-adenosyl-L-methionine = precorrin-2 + 2 S-adenosyl-L-homocysteine + H(+). It catalyses the reaction precorrin-2 + NAD(+) = sirohydrochlorin + NADH + 2 H(+). It carries out the reaction siroheme + 2 H(+) = sirohydrochlorin + Fe(2+). Its pathway is cofactor biosynthesis; adenosylcobalamin biosynthesis; precorrin-2 from uroporphyrinogen III: step 1/1. It participates in cofactor biosynthesis; adenosylcobalamin biosynthesis; sirohydrochlorin from precorrin-2: step 1/1. The protein operates within porphyrin-containing compound metabolism; siroheme biosynthesis; precorrin-2 from uroporphyrinogen III: step 1/1. It functions in the pathway porphyrin-containing compound metabolism; siroheme biosynthesis; siroheme from sirohydrochlorin: step 1/1. Its pathway is porphyrin-containing compound metabolism; siroheme biosynthesis; sirohydrochlorin from precorrin-2: step 1/1. Its function is as follows. Multifunctional enzyme that catalyzes the SAM-dependent methylations of uroporphyrinogen III at position C-2 and C-7 to form precorrin-2 via precorrin-1. Then it catalyzes the NAD-dependent ring dehydrogenation of precorrin-2 to yield sirohydrochlorin. Finally, it catalyzes the ferrochelation of sirohydrochlorin to yield siroheme. The chain is Siroheme synthase from Escherichia coli O8 (strain IAI1).